The following is a 434-amino-acid chain: MSIKNIRAREIFDSRGNPTVEVDLYTCKGLFRAAVPSGASTGIYEALELRDNDKTRYLGKGVGRAVKYVNEFLGPALCTQNLNVVEQEKIDKLMIEMDGTENKSKFGANALLGVSLAVCKAGAAEKGVPLYRHIADLAGNPEVILPVPAFNVINGGSHAGNKLAMQEFMILPVGADSFKEAMRIGAEVYHNLKNVIKEKYGKDATNVGDEGGFAPNILENKEALELLKTAINKAGYPDKIVIGMDVAASEFYRDGKYDLDFKSPDDPSRYISPDKLAELYMSFVKNYPVVSIEDPFDQDHWEAWTKFTAASGIQVVGDDLTVTNPKRIAKAVEEKACNCLLLKVNQIGTVTESLEACKLAQSNGWGVMVSHRSGETEDTFIADLVVGLCTGQIKTGAPCRSERLAKYNQLLRIEEELGSKARFAGKNFRKPVFN.

Residue serine 40 coordinates Mg(2+). The substrate site is built by histidine 158 and glutamate 167. Glutamate 210 (proton donor) is an active-site residue. The Mg(2+) site is built by aspartate 245, glutamate 293, and aspartate 318. 2 residues coordinate substrate: glutamate 293 and aspartate 318. Residue lysine 343 is the Proton acceptor of the active site. Residues 370–373 (SHRS) and lysine 394 each bind substrate.

This sequence belongs to the enolase family. In terms of assembly, homodimer. Mg(2+) serves as cofactor.

The protein resides in the cytoplasm. It catalyses the reaction (2R)-2-phosphoglycerate = phosphoenolpyruvate + H2O. It functions in the pathway carbohydrate degradation; glycolysis; pyruvate from D-glyceraldehyde 3-phosphate: step 4/5. The polypeptide is Alpha-enolase (eno1) (Xenopus laevis (African clawed frog)).